Reading from the N-terminus, the 143-residue chain is UPF0201 protein Pcal_0593 (143 aa).

The protein belongs to the UPF0201 family.

The protein is UPF0201 protein Pcal_0593 of Pyrobaculum calidifontis (strain DSM 21063 / JCM 11548 / VA1).